The chain runs to 351 residues: Protein RecA (351 aa).

ATP is bound at residue 68–75 (GPESSGKT).

This sequence belongs to the RecA family.

The protein localises to the cytoplasm. In terms of biological role, can catalyze the hydrolysis of ATP in the presence of single-stranded DNA, the ATP-dependent uptake of single-stranded DNA by duplex DNA, and the ATP-dependent hybridization of homologous single-stranded DNAs. It interacts with LexA causing its activation and leading to its autocatalytic cleavage. This chain is Protein RecA, found in Chloroflexus aggregans (strain MD-66 / DSM 9485).